The primary structure comprises 174 residues: MSLNRQEKAVVIEEVSAAVAKAQSIVIAEYRGLDVASVTVLRKTARESGVYLRVLKNTLARRAVAGTAFEPLSEQLTGPLIYGISEDPVSAAKVLAGFAKSNDKLVIKAGSLPNNLLNQEGVKALATMPSREELLSKLLGTMQAPIAQFVRTLNEVPTKFARGLAAVRDQKAAA.

Belongs to the universal ribosomal protein uL10 family. As to quaternary structure, part of the ribosomal stalk of the 50S ribosomal subunit. The N-terminus interacts with L11 and the large rRNA to form the base of the stalk. The C-terminus forms an elongated spine to which L12 dimers bind in a sequential fashion forming a multimeric L10(L12)X complex.

Forms part of the ribosomal stalk, playing a central role in the interaction of the ribosome with GTP-bound translation factors. In Bordetella petrii (strain ATCC BAA-461 / DSM 12804 / CCUG 43448), this protein is Large ribosomal subunit protein uL10.